The chain runs to 328 residues: Urokinase plasminogen activator surface receptor (328 aa).

The signal sequence occupies residues 1 to 24 (MGLLRRRLLLLVVVVTTCVPASQG). UPAR/Ly6 domains are found at residues 25-118 (LRCI…GRYL), 118-213 (LECA…PPNG), and 214-299 (FQCY…RPTG). Intrachain disulfides connect Cys27–Cys48, Cys30–Cys36, and Cys41–Cys69. The N-linked (GlcNAc...) asparagine glycan is linked to Asn76. 11 disulfides stabilise this stretch: Cys95/Cys100, Cys120/Cys147, Cys123/Cys130, Cys140/Cys169, Cys175/Cys192, Cys193/Cys198, Cys216/Cys244, Cys219/Cys227, Cys237/Cys263, Cys269/Cys288, and Cys289/Cys294. N-linked (GlcNAc...) asparagine glycosylation is found at Asn184, Asn194, Asn222, Asn255, Asn283, and Asn290. Gly299 carries GPI-anchor amidated glycine lipidation. Positions 300-328 (GAPGPGPAHLILIASLLLTLRLWGIPLWT) are cleaved as a propeptide — removed in mature form.

As to quaternary structure, monomer. Interacts (via the UPAR/Ly6 domains) with SRPX2. Interacts with MRC2. Interacts with SORL1 (via N-terminal ectodomain); this interaction decreases PLAUR internalization. The ternary complex composed of PLAUR-PLAU-SERPINE1 also interacts with SORL1. Interacts with CD82; this interaction prevents PLAUR from binding to its high affinity ligand PLAU.

It is found in the cell membrane. The protein resides in the secreted. Acts as a receptor for urokinase plasminogen activator. Plays a role in localizing and promoting plasmin formation. Mediates the proteolysis-independent signal transduction activation effects of U-PA. The protein is Urokinase plasminogen activator surface receptor (Plaur) of Rattus norvegicus (Rat).